The following is a 224-amino-acid chain: Ribose-5-phosphate isomerase A (224 aa).

Substrate-binding positions include 32–35, 85–88, and 98–101; these read TGST, DGAD, and KGGG. E107 functions as the Proton acceptor in the catalytic mechanism. K125 is a binding site for substrate.

The protein belongs to the ribose 5-phosphate isomerase family. Homodimer.

The enzyme catalyses aldehydo-D-ribose 5-phosphate = D-ribulose 5-phosphate. Its pathway is carbohydrate degradation; pentose phosphate pathway; D-ribose 5-phosphate from D-ribulose 5-phosphate (non-oxidative stage): step 1/1. In terms of biological role, catalyzes the reversible conversion of ribose-5-phosphate to ribulose 5-phosphate. In Pseudomonas putida (strain ATCC 700007 / DSM 6899 / JCM 31910 / BCRC 17059 / LMG 24140 / F1), this protein is Ribose-5-phosphate isomerase A.